The sequence spans 352 residues: 4-hydroxy-2-oxovalerate aldolase 4 (352 aa).

The Pyruvate carboxyltransferase domain maps to 9 to 261; sequence IRVTDSSLRD…RTGIDTLKII (253 aa). A substrate-binding site is contributed by 17–18; that stretch reads RD. Asp18 is a Mn(2+) binding site. Catalysis depends on His21, which acts as the Proton acceptor. Residues Ser171 and His200 each contribute to the substrate site. Residues His200 and His202 each contribute to the Mn(2+) site. A substrate-binding site is contributed by Tyr291.

It belongs to the 4-hydroxy-2-oxovalerate aldolase family.

It carries out the reaction (S)-4-hydroxy-2-oxopentanoate = acetaldehyde + pyruvate. This chain is 4-hydroxy-2-oxovalerate aldolase 4, found in Rhodococcus jostii (strain RHA1).